A 167-amino-acid chain; its full sequence is Small ribosomal subunit protein uS5 (167 aa).

Residues 12–75 (LEERVVTINR…EDAKKNMVFV (64 aa)) form the S5 DRBM domain.

Belongs to the universal ribosomal protein uS5 family. Part of the 30S ribosomal subunit. Contacts proteins S4 and S8.

With S4 and S12 plays an important role in translational accuracy. In terms of biological role, located at the back of the 30S subunit body where it stabilizes the conformation of the head with respect to the body. This chain is Small ribosomal subunit protein uS5, found in Listeria innocua serovar 6a (strain ATCC BAA-680 / CLIP 11262).